The primary structure comprises 253 residues: Imidazole glycerol phosphate synthase subunit HisF (253 aa).

Catalysis depends on residues D11 and D130.

Belongs to the HisA/HisF family. As to quaternary structure, heterodimer of HisH and HisF.

It localises to the cytoplasm. The catalysed reaction is 5-[(5-phospho-1-deoxy-D-ribulos-1-ylimino)methylamino]-1-(5-phospho-beta-D-ribosyl)imidazole-4-carboxamide + L-glutamine = D-erythro-1-(imidazol-4-yl)glycerol 3-phosphate + 5-amino-1-(5-phospho-beta-D-ribosyl)imidazole-4-carboxamide + L-glutamate + H(+). It participates in amino-acid biosynthesis; L-histidine biosynthesis; L-histidine from 5-phospho-alpha-D-ribose 1-diphosphate: step 5/9. Functionally, IGPS catalyzes the conversion of PRFAR and glutamine to IGP, AICAR and glutamate. The HisF subunit catalyzes the cyclization activity that produces IGP and AICAR from PRFAR using the ammonia provided by the HisH subunit. The sequence is that of Imidazole glycerol phosphate synthase subunit HisF from Acidithiobacillus ferrooxidans (strain ATCC 23270 / DSM 14882 / CIP 104768 / NCIMB 8455) (Ferrobacillus ferrooxidans (strain ATCC 23270)).